A 465-amino-acid polypeptide reads, in one-letter code: UDP-N-acetylmuramate--L-alanine ligase (465 aa).

118–124 (GTHGKTT) provides a ligand contact to ATP.

Belongs to the MurCDEF family.

Its subcellular location is the cytoplasm. The enzyme catalyses UDP-N-acetyl-alpha-D-muramate + L-alanine + ATP = UDP-N-acetyl-alpha-D-muramoyl-L-alanine + ADP + phosphate + H(+). The protein operates within cell wall biogenesis; peptidoglycan biosynthesis. In terms of biological role, cell wall formation. This is UDP-N-acetylmuramate--L-alanine ligase from Ruegeria pomeroyi (strain ATCC 700808 / DSM 15171 / DSS-3) (Silicibacter pomeroyi).